The primary structure comprises 288 residues: 4-hydroxybenzoate octaprenyltransferase (288 aa).

A run of 8 helical transmembrane segments spans residues isoleucine 23–isoleucine 43, alanine 46–valine 66, isoleucine 98–threonine 118, leucine 141–valine 161, glutamate 163–tyrosine 183, leucine 213–methionine 233, asparagine 234–glutamine 254, and alanine 268–tryptophan 288.

This sequence belongs to the UbiA prenyltransferase family. The cofactor is Mg(2+).

The protein resides in the cell inner membrane. It carries out the reaction all-trans-octaprenyl diphosphate + 4-hydroxybenzoate = 4-hydroxy-3-(all-trans-octaprenyl)benzoate + diphosphate. It functions in the pathway cofactor biosynthesis; ubiquinone biosynthesis. Functionally, catalyzes the prenylation of para-hydroxybenzoate (PHB) with an all-trans polyprenyl group. Mediates the second step in the final reaction sequence of ubiquinone-8 (UQ-8) biosynthesis, which is the condensation of the polyisoprenoid side chain with PHB, generating the first membrane-bound Q intermediate 3-octaprenyl-4-hydroxybenzoate. This is 4-hydroxybenzoate octaprenyltransferase from Yersinia pseudotuberculosis serotype O:1b (strain IP 31758).